The chain runs to 200 residues: Octanoyltransferase (200 aa).

The region spanning 27–200 (GAEDDQLWLV…WAELFSARWR (174 aa)) is the BPL/LPL catalytic domain. Residues 66–73 (RGGQITYH), 134–136 (SLG), and 147–149 (GIA) each bind substrate. The active-site Acyl-thioester intermediate is the Cys-165.

This sequence belongs to the LipB family.

The protein localises to the cytoplasm. The catalysed reaction is octanoyl-[ACP] + L-lysyl-[protein] = N(6)-octanoyl-L-lysyl-[protein] + holo-[ACP] + H(+). It functions in the pathway protein modification; protein lipoylation via endogenous pathway; protein N(6)-(lipoyl)lysine from octanoyl-[acyl-carrier-protein]: step 1/2. Its function is as follows. Catalyzes the transfer of endogenously produced octanoic acid from octanoyl-acyl-carrier-protein onto the lipoyl domains of lipoate-dependent enzymes. Lipoyl-ACP can also act as a substrate although octanoyl-ACP is likely to be the physiological substrate. In Dichelobacter nodosus (strain VCS1703A), this protein is Octanoyltransferase.